Consider the following 174-residue polypeptide: Gamma-crystallin C (174 aa).

Beta/gamma crystallin 'Greek key' domains follow at residues 2 to 40 (GKIT…RVDS) and 41 to 83 (GCWM…RLIP). The residue at position 23 (Cys23) is an S-methylcysteine. Residues 84-87 (HTGS) form a connecting peptide region. 2 Beta/gamma crystallin 'Greek key' domains span residues 88–128 (HRMR…HVLE) and 129–171 (GCWV…RRVV).

This sequence belongs to the beta/gamma-crystallin family.

Crystallins are the dominant structural components of the vertebrate eye lens. The protein is Gamma-crystallin C (Crygc) of Rattus norvegicus (Rat).